A 351-amino-acid chain; its full sequence is GDSL esterase/lipase At3g53100 (351 aa).

Positions 1 to 24 are cleaved as a signal peptide; sequence MQKMRVSGFRVLLLVSCFFCKSKG. The Nucleophile role is filled by S36. 3 N-linked (GlcNAc...) asparagine glycosylation sites follow: N234, N254, and N318. Active-site residues include D326 and H329.

The protein belongs to the 'GDSL' lipolytic enzyme family.

It is found in the secreted. The chain is GDSL esterase/lipase At3g53100 from Arabidopsis thaliana (Mouse-ear cress).